Consider the following 607-residue polypeptide: Condensin-2 complex subunit H2 (607 aa).

A Phosphothreonine modification is found at T19. Phosphoserine occurs at positions 95, 231, 235, and 252. Disordered regions lie at residues 211 to 312 (YPMS…WQSL) and 325 to 347 (KGKP…KRKG). Residues 254-263 (GEEDAEDGAE) are compositionally biased toward acidic residues. S494 is modified (phosphoserine).

The protein belongs to the CND2 H2 (condensin-2 subunit 2) family. As to quaternary structure, component of the condensin-2 complex, which contains the SMC2 and SMC4 heterodimer, and three non SMC subunits, NCAPG2, NCAPH2 and NCAPD3 that probably regulate the complex.

The protein localises to the nucleus. Its function is as follows. Regulatory subunit of the condensin-2 complex, a complex that seems to provide chromosomes with an additional level of organization and rigidity and in establishing mitotic chromosome architecture. May promote the resolution of double-strand DNA catenanes (intertwines) between sister chromatids. Condensin-mediated compaction likely increases tension in catenated sister chromatids, providing directionality for type II topoisomerase-mediated strand exchanges toward chromatid decatenation. Required for decatenation of chromatin bridges at anaphase. Early in neurogenesis, may play an essential role to ensure accurate mitotic chromosome condensation in neuron stem cells, ultimately affecting neuron pool and cortex size. Seems to have lineage-specific role in T-cell development. The chain is Condensin-2 complex subunit H2 from Mus musculus (Mouse).